A 445-amino-acid chain; its full sequence is MSGAFGAMNPAAAPLVWEVGALCRAVSDALQARFNPVAVRGEISGFSRAASGHCYFSIKDAGGQIRCAMFRRAAQLMDFSPRDGELVELRGRLGVYEQRGDLQLVVESMQRAGQGALFEQFLRLKARLEAEGLFDAARKRSLPPLPRGIGVVTSPGAAALHDVITALRRRVPHIPVVLVPALVQGVQAPASLIDALQRLYGLAREGAGSVDGSVAGAPPIDTILLVRGGGSIEDLWAFNDERLARTIVQSPVPLISGVGHETDFTIADFCADLRAPTPTAAAELVSQPREVWMGALQLMQGRLEDGVQRLLDRQQQRLDLAAQRLGRPSEQLARSRLQLSRQAQRLRHAMQLRLQRMDHAGQGLQAQLPAGMRRGLDRRADHLARMELRLQLLDPRLVLQRGYALLTDAEGHPVTEARSAPPGTALQAQLADGSLDLVVTQPRLL.

Belongs to the XseA family. As to quaternary structure, heterooligomer composed of large and small subunits.

It is found in the cytoplasm. The catalysed reaction is Exonucleolytic cleavage in either 5'- to 3'- or 3'- to 5'-direction to yield nucleoside 5'-phosphates.. In terms of biological role, bidirectionally degrades single-stranded DNA into large acid-insoluble oligonucleotides, which are then degraded further into small acid-soluble oligonucleotides. This chain is Exodeoxyribonuclease 7 large subunit, found in Delftia acidovorans (strain DSM 14801 / SPH-1).